The primary structure comprises 348 residues: Dihydroorotase (348 aa).

Residues His-17 and His-19 each coordinate Zn(2+). Substrate contacts are provided by residues 19-21 (HLR) and Asn-45. Zn(2+) contacts are provided by Lys-103, His-140, and His-178. Lys-103 carries the N6-carboxylysine modification. His-140 is a binding site for substrate. Leu-223 contributes to the substrate binding site. Asp-251 is a binding site for Zn(2+). Residue Asp-251 is part of the active site. The substrate site is built by His-255 and Ala-267.

This sequence belongs to the metallo-dependent hydrolases superfamily. DHOase family. Class II DHOase subfamily. Homodimer. It depends on Zn(2+) as a cofactor.

It carries out the reaction (S)-dihydroorotate + H2O = N-carbamoyl-L-aspartate + H(+). It functions in the pathway pyrimidine metabolism; UMP biosynthesis via de novo pathway; (S)-dihydroorotate from bicarbonate: step 3/3. Catalyzes the reversible cyclization of carbamoyl aspartate to dihydroorotate. The protein is Dihydroorotase of Enterobacter sp. (strain 638).